The chain runs to 1105 residues: ATP-dependent DNA helicase MPH1 (1105 aa).

Residues 94–261 (IVQRAFYDNL…EIIDNLSISK (168 aa)) form the Helicase ATP-binding domain. Residue 107-114 (LPTGLGKT) coordinates ATP. The DEAH box signature appears at 209-212 (DEAH). The 174-residue stretch at 468-641 (SIERIGSNLR…LITLAQSNRI (174 aa)) folds into the Helicase C-terminal domain. Disordered regions lie at residues 493 to 534 (EEAY…AQIK), 684 to 708 (KGKK…EKRF), 758 to 824 (IQSK…PKLG), 850 to 880 (LVTG…ECAP), and 918 to 953 (VSDD…FDEG). A compositionally biased stretch (basic residues) spans 499 to 511 (KGKKGRTKGKATK). Basic and acidic residues predominate over residues 518–532 (TPERSTSRTSSEDAQ). Basic residues predominate over residues 684-705 (KGKKVTKSKSKSKSNSKSKKIE). Basic and acidic residues predominate over residues 764–787 (PVKENQSKRPNSEHICEEDSRQET). Over residues 788–799 (ENNSNESNGSFE) the composition is skewed to low complexity. Residues 927–943 (DSINNQQLHKNKNLGST) show a composition bias toward polar residues. A compositionally biased stretch (acidic residues) spans 944–953 (SDDDDAFDEG).

This sequence belongs to the DEAD box helicase family. DEAH subfamily. FANCM sub-subfamily. Interacts with the MHF histone-fold complex to form the FANCM-MHF complex.

Its subcellular location is the nucleus. It carries out the reaction ATP + H2O = ADP + phosphate + H(+). Functionally, ATP-dependent DNA helicase involved in DNA damage repair by homologous recombination and in genome maintenance. Capable of unwinding D-loops. Plays a role in limiting crossover recombinants during mitotic DNA double-strand break (DSB) repair. Component of a FANCM-MHF complex which promotes gene conversion at blocked replication forks, probably by reversal of the stalled fork. The chain is ATP-dependent DNA helicase MPH1 from Debaryomyces hansenii (strain ATCC 36239 / CBS 767 / BCRC 21394 / JCM 1990 / NBRC 0083 / IGC 2968) (Yeast).